Consider the following 233-residue polypeptide: Phosducin-like protein C2A9.09 (233 aa).

Residues 58–212 enclose the Phosducin domain; that stretch reads EDEEDDEFLQ…DIAALKDPQN (155 aa). The segment at 86–233 is thioredoxin fold; that stretch reads FGSVYPISKP…VNDDLDDDFD (148 aa). A disordered region spans residues 207–233; that stretch reads LKDPQNAEDELGKRDSSVNDDLDDDFD. Residues S222 and S223 each carry the phosphoserine modification. The span at 224-233 shows a compositional bias: acidic residues; it reads VNDDLDDDFD.

Belongs to the phosducin family.

This Schizosaccharomyces pombe (strain 972 / ATCC 24843) (Fission yeast) protein is Phosducin-like protein C2A9.09.